Consider the following 549-residue polypeptide: MEADFVIIGSGSAGSAMAYRLSEDGRYSVIVIEYGVPDVGPLIQMPAALSFPMNMETYDWGFSTEPEPHIGGRSLVTPRGKVLGGSSSINGMVYVRGHARDYDHWSESGARGWAYADVLPYFKRMENSSGGQEGWRGTNGPLYIQRGKRDNPLFHAFVEAGHEAGFEVTEDYNGEKQEGFGPMEQTIHNGRRWSAANAYLKPALKRPNVKLVKGLARKIVLEGKRAVGVEIEAGRSFSTIRARREVIIAASSINSPKLLMLSGIGPAAQLKEHGIEVVADRPGVGQNLQDHLEVYIQQECTQPITLYSKLNLFSKAKIGAEWLFFKTGDGATNHFESAAFLRSKAGVEYPDIQYHFLPVAIRYDGKAAAQSHGFQAHVGPMRSKSRGSVTLRSANPREKPVIKFNYMSHEDDWADFRHCVRLTREIFGQAAFNPYRGAEIQPGAHVQSDDEIDNFIKEHVESAFHPCGTCKMGAVDDPMAVVDAECRVIGVEGLRVADSSIFPRITNGNLNGPSIMVGEKASDHILGRTPLARSDQEPWINPRWQVSDR.

4–33 provides a ligand contact to FAD; sequence DFVIIGSGSAGSAMAYRLSEDGRYSVIVIE. The active-site Proton acceptor is the His-465.

Belongs to the GMC oxidoreductase family. FAD serves as cofactor.

It carries out the reaction choline + A = betaine aldehyde + AH2. The enzyme catalyses betaine aldehyde + NAD(+) + H2O = glycine betaine + NADH + 2 H(+). Its pathway is amine and polyamine biosynthesis; betaine biosynthesis via choline pathway; betaine aldehyde from choline (cytochrome c reductase route): step 1/1. Involved in the biosynthesis of the osmoprotectant glycine betaine. Catalyzes the oxidation of choline to betaine aldehyde and betaine aldehyde to glycine betaine at the same rate. This chain is Oxygen-dependent choline dehydrogenase, found in Brucella anthropi (strain ATCC 49188 / DSM 6882 / CCUG 24695 / JCM 21032 / LMG 3331 / NBRC 15819 / NCTC 12168 / Alc 37) (Ochrobactrum anthropi).